The sequence spans 115 residues: U3-lycotoxin-Ls1a (115 aa).

The signal sequence occupies residues 1-20 (MKFVLLFGVFLVTLFSYSSA). Positions 21 to 44 (EMLDDFDQAAEDELLSLIEKEEAR) are excised as a propeptide. 4 disulfides stabilise this stretch: Cys-48–Cys-63, Cys-55–Cys-72, Cys-62–Cys-87, and Cys-74–Cys-85.

This sequence belongs to the neurotoxin 19 (CSTX) family. 01 subfamily. Expressed by the venom gland.

It is found in the secreted. This Lycosa singoriensis (Wolf spider) protein is U3-lycotoxin-Ls1a.